Consider the following 477-residue polypeptide: Adenosylhomocysteinase (477 aa).

Substrate is bound by residues threonine 63, aspartate 142, and glutamate 202. NAD(+) is bound at residue threonine 203–threonine 205. Residues lysine 232 and aspartate 236 each coordinate substrate. Residues asparagine 237, glycine 266–glycine 271, glutamate 289, asparagine 324, isoleucine 345–histidine 347, and asparagine 390 each bind NAD(+).

Belongs to the adenosylhomocysteinase family. NAD(+) serves as cofactor.

It is found in the cytoplasm. It catalyses the reaction S-adenosyl-L-homocysteine + H2O = L-homocysteine + adenosine. It functions in the pathway amino-acid biosynthesis; L-homocysteine biosynthesis; L-homocysteine from S-adenosyl-L-homocysteine: step 1/1. Functionally, may play a key role in the regulation of the intracellular concentration of adenosylhomocysteine. The polypeptide is Adenosylhomocysteinase (Leptothrix cholodnii (strain ATCC 51168 / LMG 8142 / SP-6) (Leptothrix discophora (strain SP-6))).